The following is a 697-amino-acid chain: tRNA 5-methylaminomethyl-2-thiouridine biosynthesis bifunctional protein MnmC (697 aa).

A tRNA (mnm(5)s(2)U34)-methyltransferase region spans residues 1–269 (MNKTPLLSVS…LRQQLQQQFA (269 aa)). The segment at 287–697 (IGGGIASASL…RKLLKGKALM (411 aa)) is FAD-dependent cmnm(5)s(2)U34 oxidoreductase.

In the N-terminal section; belongs to the methyltransferase superfamily. tRNA (mnm(5)s(2)U34)-methyltransferase family. The protein in the C-terminal section; belongs to the DAO family. The cofactor is FAD.

The protein resides in the cytoplasm. The catalysed reaction is 5-aminomethyl-2-thiouridine(34) in tRNA + S-adenosyl-L-methionine = 5-methylaminomethyl-2-thiouridine(34) in tRNA + S-adenosyl-L-homocysteine + H(+). Functionally, catalyzes the last two steps in the biosynthesis of 5-methylaminomethyl-2-thiouridine (mnm(5)s(2)U) at the wobble position (U34) in tRNA. Catalyzes the FAD-dependent demodification of cmnm(5)s(2)U34 to nm(5)s(2)U34, followed by the transfer of a methyl group from S-adenosyl-L-methionine to nm(5)s(2)U34, to form mnm(5)s(2)U34. This is tRNA 5-methylaminomethyl-2-thiouridine biosynthesis bifunctional protein MnmC from Shewanella frigidimarina (strain NCIMB 400).